The sequence spans 180 residues: Large ribosomal subunit protein uL5 (180 aa).

It belongs to the universal ribosomal protein uL5 family. As to quaternary structure, part of the 50S ribosomal subunit; part of the 5S rRNA/L5/L18/L25 subcomplex. Contacts the 5S rRNA and the P site tRNA. Forms a bridge to the 30S subunit in the 70S ribosome.

Functionally, this is one of the proteins that bind and probably mediate the attachment of the 5S RNA into the large ribosomal subunit, where it forms part of the central protuberance. In the 70S ribosome it contacts protein S13 of the 30S subunit (bridge B1b), connecting the 2 subunits; this bridge is implicated in subunit movement. Contacts the P site tRNA; the 5S rRNA and some of its associated proteins might help stabilize positioning of ribosome-bound tRNAs. This chain is Large ribosomal subunit protein uL5, found in Synechococcus sp. (strain JA-2-3B'a(2-13)) (Cyanobacteria bacterium Yellowstone B-Prime).